We begin with the raw amino-acid sequence, 274 residues long: MQQLQNIIETAFERRAEITPANADTITREAVNQVIALLDSGALRVAEKIDGQWVTHQWLKKAVLLSFRINDNQVIEGAESRYFDKVPMKFANYDEARFQKEGFRVVPPAAVRQGAFIARNTVLMPSYVNIGAYVDEGTMVDTWATVGSCAQIGKNVHLSGGVGIGGVLEPLQANPTIIEDNCFIGARSEIVEGVIVEEGSVISMGVYIGQSTKIYDRETGEVHYGRVPAGSVVVSGNLPSKDGKYSLYCAVIVKKVDAKTRGKVGINELLRTID.

Substrate contacts are provided by R104 and D141.

This sequence belongs to the transferase hexapeptide repeat family. In terms of assembly, homotrimer.

It is found in the cytoplasm. It catalyses the reaction (S)-2,3,4,5-tetrahydrodipicolinate + succinyl-CoA + H2O = (S)-2-succinylamino-6-oxoheptanedioate + CoA. It functions in the pathway amino-acid biosynthesis; L-lysine biosynthesis via DAP pathway; LL-2,6-diaminopimelate from (S)-tetrahydrodipicolinate (succinylase route): step 1/3. This is 2,3,4,5-tetrahydropyridine-2,6-dicarboxylate N-succinyltransferase from Shigella dysenteriae serotype 1 (strain Sd197).